We begin with the raw amino-acid sequence, 469 residues long: UDP-N-acetylmuramate--L-alanine ligase (469 aa).

122 to 128 contributes to the ATP binding site; the sequence is GTHGKTT.

It belongs to the MurCDEF family.

The protein localises to the cytoplasm. It catalyses the reaction UDP-N-acetyl-alpha-D-muramate + L-alanine + ATP = UDP-N-acetyl-alpha-D-muramoyl-L-alanine + ADP + phosphate + H(+). It participates in cell wall biogenesis; peptidoglycan biosynthesis. Functionally, cell wall formation. The sequence is that of UDP-N-acetylmuramate--L-alanine ligase from Legionella pneumophila (strain Paris).